The sequence spans 287 residues: AA14 family lytic polysaccharide monooxygenase A (287 aa).

The signal sequence occupies residues 1-18; the sequence is MLRILTLSILATSKLASA. Residues N33, N83, and N137 are each glycosylated (N-linked (GlcNAc...) asparagine). 3 disulfide bridges follow: C188/C193, C195/C216, and C236/C243. N-linked (GlcNAc...) asparagine glycosylation is present at N238.

This sequence belongs to the polysaccharide monooxygenase AA14 family. The cofactor is Cu(2+).

Its subcellular location is the secreted. Functionally, lytic polysaccharide monooxygenase (LPMO) that has a broad substrate specificity with strong oxidative activity on pure amorphous cellulose and xyloglucan and plays as a bifunctional enzyme to decompose some specific network structures formed between cellulose and hemicellulose in the plant cell walls. Catalysis by LPMOs requires the reduction of the active-site copper from Cu(II) to Cu(I) by a reducing agent and H(2)O(2) or O(2) as a cosubstrate. Simultaneously oxidizes cellulose, xylan and xyloglucan in natural hemi/cellulosic substrate such as fibrillated eucalyptus pulp, and releases native and oxidized cello-oligosaccharides, xylo-oligosaccharides and xyloglucan oligosaccharides from this substrate. The cellulolytic/hemicellulolytic activity becomes weaker as the contents of xylan increase in the alkaline-extracted hemi/cellulosic substrates. The chain is AA14 family lytic polysaccharide monooxygenase A from Talaromyces rugulosus (Penicillium rugulosum).